The primary structure comprises 412 residues: Fringe glycosyltransferase (412 aa).

The Cytoplasmic segment spans residues 1 to 15 (MMSLTVLSPPQRFKR). The helical; Signal-anchor for type II membrane protein transmembrane segment at 16-34 (ILQAMMLAVAVVYMTLLLY) threads the bilayer. The Lumenal portion of the chain corresponds to 35 to 412 (QSAYGYPGIQ…FPYFSFCPPR (378 aa)). Substrate is bound at residue Arg-164. Intrachain disulfides connect Cys-204-Cys-215 and Cys-233-Cys-297. Asp-237 contributes to the substrate binding site. Asp-238 provides a ligand contact to Mn(2+). The active site involves Asp-327. His-351 is a Mn(2+) binding site. Cysteines 400 and 409 form a disulfide.

Belongs to the glycosyltransferase 31 family. Mn(2+) serves as cofactor. Expressed in dorsal cells.

It is found in the golgi apparatus membrane. It carries out the reaction 3-O-(alpha-L-fucosyl)-L-threonyl-[EGF-like domain protein] + UDP-N-acetyl-alpha-D-glucosamine = 3-O-(N-acetyl-beta-D-glucosaminyl-(1-&gt;3)-alpha-L-fucosyl)-L-threonyl-[EGF-like domain protein] + UDP + H(+). The catalysed reaction is 3-O-(alpha-L-fucosyl)-L-seryl-[EGF-like domain protein] + UDP-N-acetyl-alpha-D-glucosamine = 3-O-(N-acetyl-beta-D-glucosaminyl-(1-&gt;3)-alpha-L-fucosyl)-L-seryl-[EGF-like domain protein] + UDP + H(+). Glycosyltransferase involved in the elongation of O-linked ligands to activate Notch signaling. Possesses fucose-specific beta-1,3-N-acetylglucosaminyltransferase activity; extends the O-linked fucose on the Notch EGF repeats. Boundary-specific cell-signaling molecule that is responsible for dorsal-ventral cell interactions during wing development. In Drosophila melanogaster (Fruit fly), this protein is Fringe glycosyltransferase (fng).